A 131-amino-acid chain; its full sequence is Ribosome-binding factor A (131 aa).

It belongs to the RbfA family. Monomer. Binds 30S ribosomal subunits, but not 50S ribosomal subunits or 70S ribosomes.

It is found in the cytoplasm. Its function is as follows. One of several proteins that assist in the late maturation steps of the functional core of the 30S ribosomal subunit. Associates with free 30S ribosomal subunits (but not with 30S subunits that are part of 70S ribosomes or polysomes). Required for efficient processing of 16S rRNA. May interact with the 5'-terminal helix region of 16S rRNA. The chain is Ribosome-binding factor A from Gloeothece citriformis (strain PCC 7424) (Cyanothece sp. (strain PCC 7424)).